The chain runs to 571 residues: MRTSQFLLATQKETPSDAVVVSHQLMLRAGMIRKLASGLYTWLPMGLRVLRKVEAIVREEMDAAGALEILMPGIQPAELWQESGRWEQYGPELMRLVDRHNREFCLGPTHEEVITDLARNELNSYKQLPINMYQIQTKFRDEIRPRFGLMRGREFVMKDAYSFHADHESLQVTYDRMHLAYSNIFTRLGLKFRPVEADNGSIGGAGSHEFHVLAESGEDDIVFSDGSDYAANIEKAEAIPREKTRPAATEELRLIDTPNTKTIAQLVEGFGLPIEKTVKTLVVHAAEEGKLIALIIRGDHELNEIKASQLEQVANPLVMASEAELRDAIGAGAGSLGPLNLPLPCIIDRSVELMSDFSVGANIDDKHYFGVNWERDLPVPTVADLRNVVAGDPSPDGKGTLEIKRGIEVGHIFQLGTKYSEAMKCQVLGENGKPVNLAMGCYGIGVSRVVAAAIEQNSDENGIIWNDTLAPFQIALVPLRYETDAVREATDKLYADLTAAGFEVLLDDRDKKTSPGIKFADMELIGIPHRIVVSDRGLAEGNLEYKSRTESQPQAIAVADVLSFIQGKVNR.

The protein belongs to the class-II aminoacyl-tRNA synthetase family. ProS type 1 subfamily. Homodimer.

The protein resides in the cytoplasm. It carries out the reaction tRNA(Pro) + L-proline + ATP = L-prolyl-tRNA(Pro) + AMP + diphosphate. In terms of biological role, catalyzes the attachment of proline to tRNA(Pro) in a two-step reaction: proline is first activated by ATP to form Pro-AMP and then transferred to the acceptor end of tRNA(Pro). As ProRS can inadvertently accommodate and process non-cognate amino acids such as alanine and cysteine, to avoid such errors it has two additional distinct editing activities against alanine. One activity is designated as 'pretransfer' editing and involves the tRNA(Pro)-independent hydrolysis of activated Ala-AMP. The other activity is designated 'posttransfer' editing and involves deacylation of mischarged Ala-tRNA(Pro). The misacylated Cys-tRNA(Pro) is not edited by ProRS. This chain is Proline--tRNA ligase, found in Pseudomonas syringae pv. syringae (strain B728a).